A 310-amino-acid chain; its full sequence is Olfactory receptor 4D1 (310 aa).

The Extracellular portion of the chain corresponds to 1–25 (MEPQNTTQVSMFVLLGFSQTQELQK). An N-linked (GlcNAc...) asparagine glycan is attached at asparagine 5. The chain crosses the membrane as a helical span at residues 26-49 (FLFLLFLLVYVTTIVGNLLIMVTV). Topologically, residues 50–57 (TFDCRLHT) are cytoplasmic. A helical membrane pass occupies residues 58 to 79 (PMYFLLRNLALIDLCYSTVTSP). The Extracellular segment spans residues 80–100 (KMLVDFLHETKTISYQGCMAQ). Cysteine 97 and cysteine 189 are oxidised to a cystine. Residues 101-120 (IFFFHLLGGGTVFFLSVMAY) traverse the membrane as a helical segment. The Cytoplasmic portion of the chain corresponds to 121–139 (DRYIAISQPLRYVTIMNTQ). The chain crosses the membrane as a helical span at residues 140–158 (LCVGLVVAAWVGGFVHSIV). Over 159–195 (QLALILPLPFCGPNILDNFYCDVPQVLRLACTDTSLL) the chain is Extracellular. Residues 196–219 (EFLMISNSGLLVIIWFLLLLISYT) form a helical membrane-spanning segment. At 220–235 (VILVMLRSHSGKARRK) the chain is on the cytoplasmic side. Residues 236-258 (AASTCTTHIIVVSMIFIPCIYIY) form a helical membrane-spanning segment. At 259-269 (TWPFTPFLMDK) the chain is on the extracellular side. A helical membrane pass occupies residues 270-289 (AVSISYTVMTPMLNPMIYTL). Over 290–310 (RNQDMKAAMRRLGKCLVICRE) the chain is Cytoplasmic.

It belongs to the G-protein coupled receptor 1 family.

Its subcellular location is the cell membrane. Functionally, odorant receptor. In Homo sapiens (Human), this protein is Olfactory receptor 4D1 (OR4D1).